Reading from the N-terminus, the 539-residue chain is CTP synthase (539 aa).

The segment at 1–268 is amidoligase domain; it reads MADTKYIFVT…DETVLRKVGL (268 aa). Position 15 (Ser-15) interacts with CTP. Ser-15 is a UTP binding site. Position 16 to 21 (16 to 21) interacts with ATP; the sequence is SLGKGI. L-glutamine is bound at residue Tyr-56. Position 73 (Asp-73) interacts with ATP. Residues Asp-73 and Glu-143 each coordinate Mg(2+). CTP-binding positions include 150–152, 189–194, and Lys-225; these read DIE and KTKPTQ. UTP-binding positions include 189 to 194 and Lys-225; that span reads KTKPTQ. The Glutamine amidotransferase type-1 domain occupies 294 to 536; that stretch reads TIALVGKYVE…IREAIKTRKK (243 aa). Gly-356 contributes to the L-glutamine binding site. Cys-383 acts as the Nucleophile; for glutamine hydrolysis in catalysis. Residues 384-387, Glu-407, and Arg-464 contribute to the L-glutamine site; that span reads LGMQ. Active-site residues include His-509 and Glu-511.

Belongs to the CTP synthase family. Homotetramer.

It carries out the reaction UTP + L-glutamine + ATP + H2O = CTP + L-glutamate + ADP + phosphate + 2 H(+). The enzyme catalyses L-glutamine + H2O = L-glutamate + NH4(+). The catalysed reaction is UTP + NH4(+) + ATP = CTP + ADP + phosphate + 2 H(+). The protein operates within pyrimidine metabolism; CTP biosynthesis via de novo pathway; CTP from UDP: step 2/2. Its activity is regulated as follows. Allosterically activated by GTP, when glutamine is the substrate; GTP has no effect on the reaction when ammonia is the substrate. The allosteric effector GTP functions by stabilizing the protein conformation that binds the tetrahedral intermediate(s) formed during glutamine hydrolysis. Inhibited by the product CTP, via allosteric rather than competitive inhibition. Functionally, catalyzes the ATP-dependent amination of UTP to CTP with either L-glutamine or ammonia as the source of nitrogen. Regulates intracellular CTP levels through interactions with the four ribonucleotide triphosphates. The polypeptide is CTP synthase (Porphyromonas gingivalis (strain ATCC BAA-308 / W83)).